The sequence spans 523 residues: Protein NAM8 (523 aa).

The interval 1 to 35 (MSYKQTTYYPSRGNLVRNDSSPYTNTISSETNNSS) is disordered. The segment covering 24 to 35 (TNTISSETNNSS) has biased composition (low complexity). RRM domains are found at residues 54-145 (NQLY…WATS), 163-242 (CSIF…PTSG), and 313-385 (TTVF…WGRS). Positions 239–260 (PTSGQQQHVSGNNDYNRSSSSL) are disordered. Polar residues predominate over residues 240 to 260 (TSGQQQHVSGNNDYNRSSSSL).

As to quaternary structure, component of the U1 small nuclear ribonucleoprotein complex (U1 snRNP).

In terms of biological role, component of the U1 small nuclear ribonucleoprotein complex (U1 snRNP) involved in the initiation of meiotic recombination. Involved in the formation of DSBs at recombination hot-spots through meiosis-specific splicing of REC107 pre-mRNA. Collaborates with MER1 to promote splicing of essential meiotic mRNAs REC10, AMA1, MER3, HFM1, SPO22 and PCH2. NAM8 interacts with the pre-mRNA downstream of the 5' splice site, in a region of non-conserved sequence and is required for efficient splicing of uncapped RNA precursor. The polypeptide is Protein NAM8 (Saccharomyces cerevisiae (strain ATCC 204508 / S288c) (Baker's yeast)).